Here is a 132-residue protein sequence, read N- to C-terminus: MRHRKSGRQLNRNSSHRKAMFKNMANSLFLHETIRTTLSKAKELRRVVEPLITKAKIDSVANRRNIFSKLRDDAIVAKLFTELAPFYKDRPGGYIRILKAGFRAGDKALMAIVQLVDFETTTDIVAETTDFS.

The protein belongs to the bacterial ribosomal protein bL17 family. In terms of assembly, part of the 50S ribosomal subunit. Contacts protein L32.

This is Large ribosomal subunit protein bL17 from Ruthia magnifica subsp. Calyptogena magnifica.